The primary structure comprises 416 residues: Enterobactin exporter EntS (416 aa).

The Cytoplasmic portion of the chain corresponds to 1-21; it reads MNKQSWLLNLSLLKTHPAFRA. Residues 22 to 42 form a helical membrane-spanning segment; that stretch reads VFLARFISIVSLGLLGVAVPV. Topologically, residues 43–55 are periplasmic; it reads QIQMMTHSTWLVG. Residues 56-76 form a helical membrane-spanning segment; sequence LSVTLTGGAMFVGLMVGGVLA. Over 77–83 the chain is Cytoplasmic; the sequence is DRYERKK. The helical transmembrane segment at 84–104 threads the bilayer; the sequence is VILLARGTCGIGFIGLCLNAL. Topologically, residues 105 to 109 are periplasmic; the sequence is LPEPS. The helical transmembrane segment at 110–130 threads the bilayer; that stretch reads LLAIYLLGLWDGFFASLGVTA. At 131–156 the chain is on the cytoplasmic side; sequence LLAATPALVGRENLMQAGAITMLTVR. Residues 157–177 traverse the membrane as a helical segment; it reads LGSVISPMIGGLLLATGGVAW. Asn178 is a topological domain (periplasmic). The chain crosses the membrane as a helical span at residues 179–199; it reads YGLAAAGTFITLLPLLSLPAL. At 200 to 218 the chain is on the cytoplasmic side; that stretch reads PPPPQPREHPLKSLLAGFR. The helical transmembrane segment at 219-239 threads the bilayer; sequence FLLASPLVGGIALLGGLLTMA. The Periplasmic segment spans residues 240–256; sequence SAVRVLYPALADNWQMS. The chain crosses the membrane as a helical span at residues 257-277; it reads AAEIGFLYAAIPLGAAIGALT. Over 278–287 the chain is Cytoplasmic; sequence SGKLAHSARP. The helical transmembrane segment at 288-307 threads the bilayer; the sequence is GLLMLLSTLGSFLAIGLFGL. Residues 308 to 313 lie on the Periplasmic side of the membrane; it reads MPMWIL. Residues 314–336 form a helical membrane-spanning segment; sequence GVVCLALFGWLSAVSSLLQYTML. Residues 337–356 are Cytoplasmic-facing; sequence QTQTPEAMLGRINGLWTAQN. A helical transmembrane segment spans residues 357-377; the sequence is VTGDAIGAALLGGLGAMMTPV. Ala378 is a topological domain (periplasmic). A helical transmembrane segment spans residues 379 to 399; sequence SASASGFGLLIIGVLLLLVLV. Residues 400–416 are Cytoplasmic-facing; it reads ELRRFRQTPPQVTASDS.

Belongs to the major facilitator superfamily. EntS (TC 2.A.1.38) family.

The protein localises to the cell inner membrane. In terms of biological role, component of an export pathway for enterobactin. The sequence is that of Enterobactin exporter EntS from Shigella boydii serotype 4 (strain Sb227).